The following is a 205-amino-acid chain: Outer-membrane lipoprotein LolB (205 aa).

The N-terminal stretch at 1 to 17 (MRLRLFLAASALALLSG) is a signal peptide. Cys-18 carries N-palmitoyl cysteine lipidation. The S-diacylglycerol cysteine moiety is linked to residue Cys-18.

The protein belongs to the LolB family. Monomer.

It localises to the cell outer membrane. Its function is as follows. Plays a critical role in the incorporation of lipoproteins in the outer membrane after they are released by the LolA protein. The polypeptide is Outer-membrane lipoprotein LolB (Pseudomonas paraeruginosa (strain DSM 24068 / PA7) (Pseudomonas aeruginosa (strain PA7))).